Here is a 168-residue protein sequence, read N- to C-terminus: MKKFFTVAILAGSVLSTAHGSLLNLKAMVEAVTGRSAILSFVGYGCYCGLGGRGQPKDEVDWCCHAHDCCYQELFDQGCHPYVDHYDHTIENNTEIVCSDLNKTECDKQTCMCDKNMVLCLMNQTYREEYRGFLNVYCQGPTPNCSIYEPPPEEVTCSHQSPAPPAPP.

The first 20 residues, 1-20, serve as a signal peptide directing secretion; it reads MKKFFTVAILAGSVLSTAHG. Cystine bridges form between Cys46–Cys138, Cys48–Cys64, Cys63–Cys120, Cys69–Cys145, Cys70–Cys113, Cys79–Cys106, and Cys98–Cys111. 3 residues coordinate Ca(2+): Tyr47, Gly49, and Gly51. Residue His67 is part of the active site. Asp68 is a Ca(2+) binding site. N-linked (GlcNAc...) asparagine glycans are attached at residues Asn92 and Asn102. Residue Asp114 is part of the active site. 2 N-linked (GlcNAc...) asparagine glycosylation sites follow: Asn123 and Asn144. The required for localization on the plasma membrane stretch occupies residues 139–168; that stretch reads QGPTPNCSIYEPPPEEVTCSHQSPAPPAPP.

Belongs to the phospholipase A2 family. It depends on Ca(2+) as a cofactor. In terms of tissue distribution, expressed at high levels in placenta, testis, thymus and at lower levels in heart, kidney, liver and prostate. Highly expressed in rheumatoid arthritic tissues, including synovial lining cells in the intima, capillary endothelial cells and plasma cells.

Its subcellular location is the secreted. The protein resides in the cell membrane. It catalyses the reaction a 1,2-diacyl-sn-glycero-3-phosphocholine + H2O = a 1-acyl-sn-glycero-3-phosphocholine + a fatty acid + H(+). The enzyme catalyses 1-hexadecanoyl-2-(9Z-octadecenoyl)-sn-glycero-3-phospho-(1'-sn-glycerol) + H2O = 1-hexadecanoyl-sn-glycero-3-phospho-(1'-sn-glycerol) + (9Z)-octadecenoate + H(+). The catalysed reaction is 1-hexadecanoyl-2-(9Z,12Z-octadecadienoyl)-sn-glycero-3-phosphoethanolamine + H2O = 1-hexadecanoyl-sn-glycero-3-phosphoethanolamine + (9Z,12Z)-octadecadienoate + H(+). It carries out the reaction 1-hexadecanoyl-2-(5Z,8Z,11Z,14Z-eicosatetraenoyl)-sn-glycero-3-phosphoethanolamine + H2O = 1-hexadecanoyl-sn-glycero-3-phosphoethanolamine + (5Z,8Z,11Z,14Z)-eicosatetraenoate + H(+). It catalyses the reaction 1-hexadecanoyl-2-(9Z-octadecenoyl)-sn-glycero-3-phosphocholine + H2O = 1-hexadecanoyl-sn-glycero-3-phosphocholine + (9Z)-octadecenoate + H(+). The enzyme catalyses 1-hexadecanoyl-2-(9Z-octadecenoyl)-sn-glycero-3-phospho-L-serine + H2O = 1-hexadecanoyl-sn-glycero-3-phospho-L-serine + (9Z)-octadecenoate + H(+). Secretory calcium-dependent phospholipase A2 that primarily targets extracellular phospholipids. Hydrolyzes the ester bond of the fatty acyl group attached at the sn-2 position of phospholipids (phospholipase A2 activity), the catalytic efficiency decreasing in the following order: phosphatidylglycerols &gt; phosphatidylethanolamines &gt; phosphatidylcholines &gt; phosphatidylserines. May play a role in lipid mediator production in inflammatory conditions, by providing arachidonic acid to downstream cyclooxygenases and lipoxygenases. This chain is Group IIF secretory phospholipase A2 (PLA2G2F), found in Homo sapiens (Human).